Reading from the N-terminus, the 134-residue chain is Protein PsiE homolog (134 aa).

The next 4 membrane-spanning stretches (helical) occupy residues 14 to 34, 56 to 76, 82 to 102, and 106 to 126; these read LQWILNIALIILSIVLSIFLI, VESIIVYFLYFEFIALIIKYF, FPLRYFIYIGITALIRLIIVS, and PMETLLYAGAILVLVIALYIS.

This sequence belongs to the PsiE family.

It localises to the cell membrane. The chain is Protein PsiE homolog from Bacillus anthracis.